The primary structure comprises 359 residues: Acetoin catabolism protein X (359 aa).

The protein localises to the cell membrane. It functions in the pathway ketone degradation; acetoin degradation. Essential for acetoin catabolism. The chain is Acetoin catabolism protein X (acoX) from Cupriavidus necator (strain ATCC 17699 / DSM 428 / KCTC 22496 / NCIMB 10442 / H16 / Stanier 337) (Ralstonia eutropha).